A 346-amino-acid polypeptide reads, in one-letter code: Annexin A1 (346 aa).

At alanine 2 the chain carries N-acetylalanine. The residue at position 5 (serine 5) is a Phosphoserine; by TRPM7. Residue glutamine 19 forms an Isoglutamyl lysine isopeptide (Gln-Lys) (interchain with K-?) linkage. Phosphotyrosine; by EGFR is present on tyrosine 21. Residues serine 34 and serine 37 each carry the phosphoserine modification. Threonine 41 is modified (phosphothreonine). Annexin repeat units lie at residues 42–113 (FNPS…ALLK), 114–185 (TPAQ…SLAK), 197–269 (DLAD…VIVK), and 273–344 (SQPM…ALCG). Lysine 58 carries the N6-acetyllysine modification. Ca(2+) is bound by residues glycine 59, valine 60, glutamate 62, lysine 97, leucine 100, glutamate 105, methionine 127, glycine 129, glycine 131, threonine 132, and glutamate 134. Threonine 136 carries the phosphothreonine modification. Ca(2+)-binding residues include aspartate 171, glycine 210, and arginine 213. Lysine 214 is covalently cross-linked (Glycyl lysine isopeptide (Lys-Gly) (interchain with G-Cter in SUMO1); alternate). Residue lysine 214 forms a Glycyl lysine isopeptide (Lys-Gly) (interchain with G-Cter in SUMO2); alternate linkage. Residue glycine 215 coordinates Ca(2+). An N6-acetyllysine modification is found at lysine 239. Ca(2+)-binding residues include aspartate 253, glutamate 255, and leucine 256. Lysine 257 participates in a covalent cross-link: Glycyl lysine isopeptide (Lys-Gly) (interchain with G-Cter in SUMO1). Ca(2+) is bound by residues glutamate 261, methionine 286, glycine 288, and glycine 290. Lysine 312 bears the N6-acetyllysine mark. Cysteines 324 and 343 form a disulfide. Residues leucine 328, glutamate 330, and threonine 331 each contribute to the Ca(2+) site. Lysine 332 is covalently cross-linked (Glycyl lysine isopeptide (Lys-Gly) (interchain with G-Cter in SUMO1)). Glutamate 336 is a binding site for Ca(2+).

It belongs to the annexin family. As to quaternary structure, homodimer; non-covalently linked. Homodimer; linked by transglutamylation. Homodimers linked by transglutamylation are observed in placenta, but not in other tissues. Interacts with S100A11. Heterotetramer, formed by two molecules each of S100A11 and ANXA1. Interacts with DYSF. Interacts with EGFR. In terms of processing, phosphorylated by protein kinase C, EGFR and TRPM7. Phosphorylated in response to EGF treatment. Sumoylated. Post-translationally, proteolytically cleaved by cathepsin CTSG to release the active N-terminal peptide Ac2-26. In terms of tissue distribution, detected on surface epithelia and mucosal glands in nasal cavity, trachea, bronchi and bronchioles. Detected in blood vessel endothelial cells. Detected in neutrophils (at protein level).

It localises to the nucleus. The protein localises to the cytoplasm. It is found in the cell projection. The protein resides in the cilium. Its subcellular location is the basolateral cell membrane. It localises to the lateral cell membrane. The protein localises to the cell membrane. It is found in the apical cell membrane. The protein resides in the membrane. Its subcellular location is the endosome membrane. It localises to the secreted. The protein localises to the extracellular space. It is found in the early endosome. The protein resides in the cytoplasmic vesicle membrane. Its subcellular location is the extracellular exosome. It localises to the cytoplasmic vesicle. The protein localises to the secretory vesicle lumen. It is found in the phagocytic cup. Plays important roles in the innate immune response as effector of glucocorticoid-mediated responses and regulator of the inflammatory process. Has anti-inflammatory activity. Plays a role in glucocorticoid-mediated down-regulation of the early phase of the inflammatory response. Contributes to the adaptive immune response by enhancing signaling cascades that are triggered by T-cell activation, regulates differentiation and proliferation of activated T-cells. Promotes the differentiation of T-cells into Th1 cells and negatively regulates differentiation into Th2 cells. Has no effect on unstimulated T-cells. Negatively regulates hormone exocytosis via activation of the formyl peptide receptors and reorganization of the actin cytoskeleton. Has high affinity for Ca(2+) and can bind up to eight Ca(2+) ions. Displays Ca(2+)-dependent binding to phospholipid membranes. Plays a role in the formation of phagocytic cups and phagosomes. Plays a role in phagocytosis by mediating the Ca(2+)-dependent interaction between phagosomes and the actin cytoskeleton. Functionally, functions at least in part by activating the formyl peptide receptors and downstream signaling cascades. Promotes chemotaxis of granulocytes and monocytes via activation of the formyl peptide receptors. Promotes rearrangement of the actin cytoskeleton, cell polarization and cell migration. Promotes resolution of inflammation and wound healing. Acts via neutrophil N-formyl peptide receptors to enhance the release of CXCL2. In Bos taurus (Bovine), this protein is Annexin A1 (ANXA1).